A 334-amino-acid polypeptide reads, in one-letter code: MLRIFHNTKYEFVRWWRVAAGLTLAFIAAGFVSFAVTGGVNYSIEFTGGTLMQLQFKTPPDVAEVRSALDAAGIQGAEIQQFGANTDFTIRARDEKQVEAQDAGAEGISRQITAALDAKFGAGTVTIVRTEAVGPKVGAELRTGAAMAMLIASIFTLIYLAIRFDWRFGLAAVLSTTHDILITLAFIKIFHIEVSLTVVAAILTLVGYSANDTIIIFDRVRENLKKPHKGETLSHILDRSINETLPRSIMTHTTTFSATLALLLLAGEVIRPFAWVMAFGVVMATFSSIYVAGPLLLWIEGRWPRLDDAATARAVRAGEAATTTARGTDRVSAR.

The next 6 helical transmembrane spans lie at 18–38 (VAAGLTLAFIAAGFVSFAVTG), 144–164 (GAAMAMLIASIFTLIYLAIRF), 168–190 (FGLAAVLSTTHDILITLAFIKIF), 195–217 (SLTVVAAILTLVGYSANDTIIIF), 258–278 (ATLALLLLAGEVIRPFAWVMA), and 279–299 (FGVVMATFSSIYVAGPLLLWI).

It belongs to the SecD/SecF family. SecF subfamily. In terms of assembly, forms a complex with SecD. Part of the essential Sec protein translocation apparatus which comprises SecA, SecYEG and auxiliary proteins SecDF. Other proteins may also be involved.

It is found in the cell inner membrane. Part of the Sec protein translocase complex. Interacts with the SecYEG preprotein conducting channel. SecDF uses the proton motive force (PMF) to complete protein translocation after the ATP-dependent function of SecA. The chain is Protein translocase subunit SecF from Gemmatimonas aurantiaca (strain DSM 14586 / JCM 11422 / NBRC 100505 / T-27).